We begin with the raw amino-acid sequence, 225 residues long: MGIRAIVVDTAGTTTDLNFIEDILFPYSAKVLPAFLEENQKNVLVENCICDVQDIALEPDADLARVTEILLQWIEEDRKATPLKTIQGLIWKQGYANGEFKGHIFPDFIEALDGYKQQGLRVYSFSSGSVDAQKLLFGNSDAGDLTDKFNGHFDTRTGNKRFKQAYCNILNTISLSPKQILFVSDVLEELKAASEAGLNVLQMVRQDNQRTGDFKQISSFAEIEL.

It belongs to the HAD-like hydrolase superfamily. MasA/MtnC family. As to quaternary structure, monomer. Requires Mg(2+) as cofactor.

The enzyme catalyses 5-methylsulfanyl-2,3-dioxopentyl phosphate + H2O = 1,2-dihydroxy-5-(methylsulfanyl)pent-1-en-3-one + phosphate. It participates in amino-acid biosynthesis; L-methionine biosynthesis via salvage pathway; L-methionine from S-methyl-5-thio-alpha-D-ribose 1-phosphate: step 3/6. The protein operates within amino-acid biosynthesis; L-methionine biosynthesis via salvage pathway; L-methionine from S-methyl-5-thio-alpha-D-ribose 1-phosphate: step 4/6. Bifunctional enzyme that catalyzes the enolization of 2,3-diketo-5-methylthiopentyl-1-phosphate (DK-MTP-1-P) into the intermediate 2-hydroxy-3-keto-5-methylthiopentenyl-1-phosphate (HK-MTPenyl-1-P), which is then dephosphorylated to form the acireductone 1,2-dihydroxy-3-keto-5-methylthiopentene (DHK-MTPene). The protein is Enolase-phosphatase E1 of Shewanella piezotolerans (strain WP3 / JCM 13877).